Consider the following 209-residue polypeptide: Small ribosomal subunit protein uS4 (209 aa).

The S4 RNA-binding domain maps to 99–160; the sequence is RRLDNVVYRL…GSKEMTLLGQ (62 aa).

Belongs to the universal ribosomal protein uS4 family. As to quaternary structure, part of the 30S ribosomal subunit. Contacts protein S5. The interaction surface between S4 and S5 is involved in control of translational fidelity.

One of the primary rRNA binding proteins, it binds directly to 16S rRNA where it nucleates assembly of the body of the 30S subunit. Its function is as follows. With S5 and S12 plays an important role in translational accuracy. The protein is Small ribosomal subunit protein uS4 of Koribacter versatilis (strain Ellin345).